A 460-amino-acid polypeptide reads, in one-letter code: NADH-ubiquinone oxidoreductase chain 4 (460 aa).

The next 13 membrane-spanning stretches (helical) occupy residues 20–42 (AKWLWTTSIAQSLIIALASLSWL), 61–81 (PLSTPLLVLTCWLLPLMILAS), 94–113 (RAYISLLVSLQTFLVLAFGA), 117–139 (IMFYVMFEATLLPTLIIITRWGN), 148–168 (TYFLFYTLAGSLPLLVALLLM), 195–215 (LWWAACLLAFLVKMPLYGVHL), 225–245 (PIAGSMILAAVLLKLGGYGMM), 258–278 (LAYPFIVLALWGIIMTGSICL), 285–304 (SLIAYSSVGHMGLVAGGILI), 308–330 (WGFTGAIILMIAHGLASSALFCL), 351–371 (MILPLMTTWWFVASLANLALP), 394–414 (LILTGLGTLITASYSLYLFLM), and 436–456 (LLIILHLIPIVLLILKPELMW).

This sequence belongs to the complex I subunit 4 family.

It localises to the mitochondrion membrane. The catalysed reaction is a ubiquinone + NADH + 5 H(+)(in) = a ubiquinol + NAD(+) + 4 H(+)(out). In terms of biological role, core subunit of the mitochondrial membrane respiratory chain NADH dehydrogenase (Complex I) that is believed to belong to the minimal assembly required for catalysis. Complex I functions in the transfer of electrons from NADH to the respiratory chain. The immediate electron acceptor for the enzyme is believed to be ubiquinone. This Oncorhynchus mykiss (Rainbow trout) protein is NADH-ubiquinone oxidoreductase chain 4 (MT-ND4).